We begin with the raw amino-acid sequence, 234 residues long: Putative B3 domain-containing protein At2g18810 (234 aa).

The interval 55 to 88 (CKNQDPEQNPNRVASSPSLCHVKSKRPQKGVSNK) is disordered. Residues 60–72 (PEQNPNRVASSPS) are compositionally biased toward polar residues. Residues 87-185 (NKPILDMDFL…MLFFALVLSD (99 aa)) constitute a DNA-binding region (TF-B3).

It localises to the nucleus. The polypeptide is Putative B3 domain-containing protein At2g18810 (Arabidopsis thaliana (Mouse-ear cress)).